Reading from the N-terminus, the 363-residue chain is Anhydro-N-acetylmuramic acid kinase (363 aa).

Position 10–17 (10–17 (GTSLDGLD)) interacts with ATP.

The protein belongs to the anhydro-N-acetylmuramic acid kinase family.

It carries out the reaction 1,6-anhydro-N-acetyl-beta-muramate + ATP + H2O = N-acetyl-D-muramate 6-phosphate + ADP + H(+). It functions in the pathway amino-sugar metabolism; 1,6-anhydro-N-acetylmuramate degradation. The protein operates within cell wall biogenesis; peptidoglycan recycling. Its function is as follows. Catalyzes the specific phosphorylation of 1,6-anhydro-N-acetylmuramic acid (anhMurNAc) with the simultaneous cleavage of the 1,6-anhydro ring, generating MurNAc-6-P. Is required for the utilization of anhMurNAc either imported from the medium or derived from its own cell wall murein, and thus plays a role in cell wall recycling. Contributes to intrinsic fosfomycin resistance in P.putida. The chain is Anhydro-N-acetylmuramic acid kinase from Pseudomonas putida (strain ATCC 47054 / DSM 6125 / CFBP 8728 / NCIMB 11950 / KT2440).